Consider the following 891-residue polypeptide: MMLLNMNLQELKQKYNYDVATKMMQQYLDIKFAHLDCLLLFRMGDFYEMFYEDAILASNVLGIALTKRGKNGEEEIAMCGVPYHALENYLTKLIEENYKVAICDQLETPEEAKNRGGYKAVVTRDVTRIITPGTIIEENLIASAEPNYLASLVIPKNKETASLCYVDLSTSEIVVVNVPETEILNELARLKPREILLSENLRSSNLADSIFKQLNFRITYQVDSFFAINKCEKIILDFYKMKDIKGIGEISSSQICAIGSVLEYLSLTQKQNIPHLPIPRIINFHSYMTIDFSTRRNLEIVTNSQGGSQGSLLSTLNHTVTKQGGRLLYNFLSSPLTNIAKINHRLNITEFFYSNLEIVKKIRELLKKTSDIERCLTRITMNRSSGRDLLSIKYTLETATIIKGVFCDAYGVNLPDFIEKIIKPLSGDAELYNLIDETIREDAPNNLNDGGIIKHEYHPKVAQLHDLINNGKLHIDKLKDQYRKETGIDSLKISHNNVIGLFIDITAKNVNKILDPKFIHRQTTVNHVRYTTAELQKLESELVNAKTLVISLEKALYADICSQVIEKASYLRMLASSLNGLDVFCNFAYIADEYDYVKPEFTDALSFDIVKGRHPVVEKALQRESKSFVYNDCHLSELERIWLITGPNMAGKSTFLRQNAIIAIIAQIGSFVPAKSAKIGVVDKIFSRIGAADDLIKGQSTFMAEMLETSAILAQSTKNSLIILDEVGRGTSTYDGVSIAWSVLEYIHDKLKCRCLFATHYHELTVMSNFLPALQNYTIAIEESGKDILFLHNIISGAADRSYGLHVAALAGLPASVINRAKQILLKFEKTSTGKGKNILSMESNNLSLFNLEPNKTTISSKLDEKFSTIDPDKLSPKEALELIYELKKWV.

646–653 (GPNMAGKS) is an ATP binding site.

It belongs to the DNA mismatch repair MutS family.

Functionally, this protein is involved in the repair of mismatches in DNA. It is possible that it carries out the mismatch recognition step. This protein has a weak ATPase activity. The polypeptide is DNA mismatch repair protein MutS (Rickettsia massiliae (strain Mtu5)).